A 709-amino-acid chain; its full sequence is Dibasic-processing endoprotease (709 aa).

A signal peptide spans 1–22 (MHPALLCGPILAIFLQFLVSSC). 2 consecutive propeptides follow at residues 23 to 82 (SPLE…IRKR) and 83 to 102 (GIDA…RYKR). The Lumenal segment spans residues 103–668 (DASESDELLN…QPVLEPSYRE (566 aa)). The Peptidase S8 domain maps to 128 to 440 (QWHIFNSNNP…FGKLDASKFV (313 aa)). N-linked (GlcNAc...) asparagine glycosylation is present at asparagine 155. Residues aspartate 162 and histidine 200 each act as charge relay system in the active site. Cystine bridges form between cysteine 216-cysteine 363 and cysteine 308-cysteine 338. Catalysis depends on serine 371, which acts as the Charge relay system. The region spanning 449-588 (VNPQTWLIAP…QLALWGESEN (140 aa)) is the P/Homo B domain. N-linked (GlcNAc...) asparagine glycosylation is found at asparagine 463, asparagine 471, and asparagine 620. The chain crosses the membrane as a helical span at residues 669–693 (IVAFITFFLLFAFIFVAVIWTWISA). Over 694 to 709 (FWKAKAPPPLSQQEIA) the chain is Cytoplasmic.

Belongs to the peptidase S8 family. Furin subfamily. It depends on Ca(2+) as a cofactor. N-glycosylated.

It is found in the golgi apparatus. The protein localises to the trans-Golgi network membrane. Its function is as follows. Membrane-bound, subtilisin-like serine protease that processes the P-factor precursor and other precursor proteins. Essential for cell viability. Cleaves substrate on the C-terminal side of dibasic residues. This Schizosaccharomyces pombe (strain 972 / ATCC 24843) (Fission yeast) protein is Dibasic-processing endoprotease (krp1).